A 422-amino-acid chain; its full sequence is G-protein coupled receptor 151 protein (422 aa).

The Extracellular portion of the chain corresponds to 1-45 (MGKAMLRAGFADTNSSNMNESFARLHFAGGYLPSDSKDWRTIIPS). 2 N-linked (GlcNAc...) asparagine glycosylation sites follow: Asn-14 and Asn-19. A helical transmembrane segment spans residues 46 to 66 (LLMAVCLVGLVGNLCVIGILL). Topologically, residues 67–76 (HGVWKRKPST) are cytoplasmic. A helical membrane pass occupies residues 77-97 (IHSLILNLSLADFSLLLFSAP). Residues 98-123 (VRAAAYSKGVWDLGWFICKSSDWFTH) are Extracellular-facing. Cysteines 115 and 191 form a disulfide. The chain crosses the membrane as a helical span at residues 124–144 (VCMAAKSLTFVVVAKACFAYA). At 145 to 157 (SDPAKQESIHSRT) the chain is on the cytoplasmic side. The chain crosses the membrane as a helical span at residues 158 to 178 (IWSVLAGIWVVASLLPLPEWL). Over 179–205 (FSTTRRHAGVEMCLVDVPAVAEEFMSM) the chain is Extracellular. Residues 206–226 (FGKLYPLLVFCLPLLLAGVYF) traverse the membrane as a helical segment. Topologically, residues 227–259 (WRAYDQCKTRCTKTRNLRDQMRSKQLTVMLLST) are cytoplasmic. A helical membrane pass occupies residues 260 to 280 (AIISALLWLPEWIAWLWVWHV). The Extracellular segment spans residues 281–290 (KAGGPMPPQG). Residues 291-311 (FIALSQVLMFFTSTANPLIFL) form a helical membrane-spanning segment. Over 312–422 (VMSEEFKAGL…HEGQETEGCN (111 aa)) the chain is Cytoplasmic. The disordered stretch occupies residues 339–422 (VQEAPAGNTE…HEGQETEGCN (84 aa)). The span at 366-380 (TDGRGSPDDSKEKSG) shows a compositional bias: basic and acidic residues.

High expression in the brain and lower levels in kidney and liver. In the nervous system expressed specifically in the habenular area (at protein level).

The protein resides in the cell membrane. Its function is as follows. Proton-sensing G-protein coupled receptor. This Mus musculus (Mouse) protein is G-protein coupled receptor 151 protein (Gpr151).